The sequence spans 143 residues: Chorion class A protein Ld5 (143 aa).

The first 21 residues, 1-21, serve as a signal peptide directing secretion; it reads MNSFALLLVCIQACLVQSVFS.

This sequence belongs to the chorion protein family.

Functionally, this protein is one of many from the eggshell of the gypsy moth. This Lymantria dispar (Gypsy moth) protein is Chorion class A protein Ld5.